The chain runs to 117 residues: Large ribosomal subunit protein bL19 (117 aa).

Belongs to the bacterial ribosomal protein bL19 family.

This protein is located at the 30S-50S ribosomal subunit interface and may play a role in the structure and function of the aminoacyl-tRNA binding site. The chain is Large ribosomal subunit protein bL19 from Exiguobacterium sibiricum (strain DSM 17290 / CCUG 55495 / CIP 109462 / JCM 13490 / 255-15).